The chain runs to 830 residues: Ribosome biogenesis protein ERB1 (830 aa).

A disordered region spans residues 1–141 (MAPQPLKVGT…ENKDLPVDEK (141 aa)). 2 stretches are compositionally biased toward acidic residues: residues 35-44 (VSEESDEEFG) and 52-109 (MSDD…DSDS). The span at 131 to 141 (EENKDLPVDEK) shows a compositional bias: basic and acidic residues. WD repeat units follow at residues 481-520 (PGDT…EVWR), 523-563 (LHAG…APHI), 660-698 (KTPG…LIRT), 701-740 (SGVK…KPYK), 744-783 (YHNR…DLMQ), and 799-830 (IDGI…LWCS).

The protein belongs to the WD repeat BOP1/ERB1 family. Component of the NOP7 complex, composed of ERB1, NOP7 and YTM1. The complex is held together by ERB1, which interacts with NOP7 via its N-terminal domain and with YTM1 via a high-affinity interaction between the seven-bladed beta-propeller domains of the 2 proteins. The NOP7 complex associates with the 66S pre-ribosome.

It is found in the nucleus. It localises to the nucleolus. The protein resides in the nucleoplasm. Functionally, component of the NOP7 complex, which is required for maturation of the 25S and 5.8S ribosomal RNAs and formation of the 60S ribosome. The protein is Ribosome biogenesis protein ERB1 of Cryptococcus neoformans var. neoformans serotype D (strain B-3501A) (Filobasidiella neoformans).